The sequence spans 477 residues: Sporulation-specific protein 77 (477 aa).

The disordered stretch occupies residues 428–452; sequence SQQRESSNAESESITSSTEEDEEGL. Over residues 432-444 the composition is skewed to low complexity; that stretch reads ESSNAESESITSS.

The protein resides in the cytoplasm. Required for spore wall assembly and ascus formation. The protein is Sporulation-specific protein 77 (SPO77) of Saccharomyces cerevisiae (strain ATCC 204508 / S288c) (Baker's yeast).